A 326-amino-acid polypeptide reads, in one-letter code: Guanine nucleotide-binding protein subunit beta-like protein 1 (326 aa).

WD repeat units lie at residues 17–61 (GTQS…IVTT), 64–104 (GHGG…NTIM), 159–202 (ARPG…VCSQ), 205–244 (CHEE…SLQV), 250–291 (LTNP…AVLA), and 292–325 (FHSA…LYPC).

In terms of tissue distribution, expressed at low levels in most tissues and highly expressed in adult testis. Widely expressed in adult brain with striking regional distribution in forebrain, midbrain, and hindbrain structures, including the thalamus, hypothalamus, amygdala, hippocampus, pons.

Its subcellular location is the cytoplasm. It is found in the nucleus. Acts as a critical regulator of DNA damage response (DDR) signaling via specifically regulating phosphatidylinositol 3-kinase-related protein kinase (PIKK) family proteins. The protein is Guanine nucleotide-binding protein subunit beta-like protein 1 (Gnb1l) of Mus musculus (Mouse).